The chain runs to 406 residues: RNA exonuclease 4 (406 aa).

The segment covering 1–10 has biased composition (polar residues); the sequence is MAPELSSNWK. Disordered regions lie at residues 1 to 108 and 156 to 181; these read MAPE…TLPS and AGLTLPGHSSSSPKSNKNGLPLPTDL. Composition is skewed to low complexity over residues 54-64, 72-82, and 94-108; these read SQQQQQASNPS, SQTQSQPSSQK, and SKPTTSSSPNSTLPS. Over residues 162–173 the composition is skewed to polar residues; that stretch reads GHSSSSPKSNKN. One can recognise an Exonuclease domain in the interval 216–367; it reads YLSIDCEMVG…EDARVAMLLF (152 aa). The segment covering 377 to 387 has biased composition (basic and acidic residues); it reads ENSNRYEEGQA. Positions 377–406 are disordered; that stretch reads ENSNRYEEGQAKKGGNGGGGGGGKKKKGKK. The segment covering 388–398 has biased composition (gly residues); the sequence is KKGGNGGGGGG.

The protein belongs to the REXO4 family.

It is found in the nucleus. Exoribonuclease involved in ribosome biosynthesis. Involved in the processing of ITS1, the internal transcribed spacer localized between the 18S and 5.8S rRNAs. In Neurospora crassa (strain ATCC 24698 / 74-OR23-1A / CBS 708.71 / DSM 1257 / FGSC 987), this protein is RNA exonuclease 4 (rex-4).